Consider the following 419-residue polypeptide: Serine hydroxymethyltransferase (419 aa).

Residues leucine 121 and 125-127 contribute to the (6S)-5,6,7,8-tetrahydrofolate site; that span reads GHL. Position 229 is an N6-(pyridoxal phosphate)lysine (lysine 229).

This sequence belongs to the SHMT family. In terms of assembly, homodimer. The cofactor is pyridoxal 5'-phosphate.

Its subcellular location is the cytoplasm. The catalysed reaction is (6R)-5,10-methylene-5,6,7,8-tetrahydrofolate + glycine + H2O = (6S)-5,6,7,8-tetrahydrofolate + L-serine. The protein operates within one-carbon metabolism; tetrahydrofolate interconversion. It functions in the pathway amino-acid biosynthesis; glycine biosynthesis; glycine from L-serine: step 1/1. Catalyzes the reversible interconversion of serine and glycine with tetrahydrofolate (THF) serving as the one-carbon carrier. This reaction serves as the major source of one-carbon groups required for the biosynthesis of purines, thymidylate, methionine, and other important biomolecules. Also exhibits THF-independent aldolase activity toward beta-hydroxyamino acids, producing glycine and aldehydes, via a retro-aldol mechanism. The chain is Serine hydroxymethyltransferase from Streptomyces griseus subsp. griseus (strain JCM 4626 / CBS 651.72 / NBRC 13350 / KCC S-0626 / ISP 5235).